The sequence spans 186 residues: dCTP deaminase (186 aa).

Position 107-112 (107-112 (KSSYAR)) interacts with dCTP. Glu-133 acts as the Proton donor/acceptor in catalysis. Gln-152, Tyr-166, and Gln-176 together coordinate dCTP.

The protein belongs to the dCTP deaminase family. Homotrimer.

It catalyses the reaction dCTP + H2O + H(+) = dUTP + NH4(+). Its pathway is pyrimidine metabolism; dUMP biosynthesis; dUMP from dCTP (dUTP route): step 1/2. In terms of biological role, catalyzes the deamination of dCTP to dUTP. In Chloroflexus aggregans (strain MD-66 / DSM 9485), this protein is dCTP deaminase.